The primary structure comprises 514 residues: Beta-secretase 2 (514 aa).

An N-terminal signal peptide occupies residues 1-20; sequence MGALLRALLLPLLAQWLLRA. The propeptide occupies 21-62; the sequence is VPVLAPAPFTLPLQVAGAANHRASTVPGLGTPELPRADGLAL. Residues 21–469 lie on the Extracellular side of the membrane; that stretch reads VPVLAPAPFT…NEPILWIVSY (449 aa). In terms of domain architecture, Peptidase A1 spans 88 to 425; that stretch reads YYLEMLIGTP…DRAQRRVGFA (338 aa). Asp106 is an active-site residue. Asn166 carries an N-linked (GlcNAc...) asparagine glycan. Intrachain disulfides connect Cys229–Cys429, Cys288–Cys453, and Cys340–Cys389. Asp299 is a catalytic residue. An N-linked (GlcNAc...) asparagine glycan is attached at Asn362. The helical transmembrane segment at 470 to 490 threads the bilayer; that stretch reads ALMSVCGAILLVLILLLLFPL. The Cytoplasmic portion of the chain corresponds to 491–514; it reads HCRHAPRDPEVVNDESSLVRHRWK.

The protein belongs to the peptidase A1 family. Monomer. Interacts with RTN3 and RTN4. Undergoes autoproteolytic cleavage. In terms of processing, glycosylated.

Its subcellular location is the cell membrane. The protein localises to the golgi apparatus. It is found in the endoplasmic reticulum. It localises to the endosome. The protein resides in the melanosome. It carries out the reaction Broad endopeptidase specificity. Cleaves Glu-Val-Asn-Leu-|-Asp-Ala-Glu-Phe in the Swedish variant of Alzheimer's amyloid precursor protein.. In terms of biological role, responsible for the proteolytic processing of the amyloid precursor protein (APP). Cleaves APP, between residues 690 and 691, leading to the generation and extracellular release of beta-cleaved soluble APP, and a corresponding cell-associated C-terminal fragment which is later released by gamma-secretase. It has also been shown that it can cleave APP between residues 671 and 672. Involved in the proteolytic shedding of PMEL at early stages of melanosome biogenesis. Cleaves PMEL within the M-beta fragment to release the amyloidogenic PMEL luminal fragment containing M-alpha and a small portion of M-beta N-terminus. This is a prerequisite step for subsequent processing and assembly of PMEL fibrils into amyloid sheets. Responsible also for the proteolytic processing of CLTRN in pancreatic beta cells. This is Beta-secretase 2 (Bace2) from Rattus norvegicus (Rat).